We begin with the raw amino-acid sequence, 474 residues long: Aspartic-type endopeptidase ctsD (474 aa).

The N-terminal stretch at 1 to 19 is a signal peptide; that stretch reads MHLLQCLLSTISLASTVTA. One can recognise a Peptidase A1 domain in the interval 106 to 413; sequence YFATVRVGSQ…DYDNHRIGFA (308 aa). Residue Asp124 is part of the active site. N-linked (GlcNAc...) asparagine glycosylation is found at Asn189, Asn197, Asn275, and Asn301. Asp307 is a catalytic residue. Asn338, Asn344, and Asn414 each carry an N-linked (GlcNAc...) asparagine glycan. Ser452 is lipidated: GPI-anchor amidated serine. Positions 453–474 are cleaved as a propeptide — removed in mature form; sequence ASIVSRFVHWPFIFALLCMVLV.

This sequence belongs to the peptidase A1 family.

The protein localises to the cell membrane. Secreted aspartic-type endopeptidase which is secreted and contributes to virulence. In Aspergillus fumigatus (strain ATCC MYA-4609 / CBS 101355 / FGSC A1100 / Af293) (Neosartorya fumigata), this protein is Aspartic-type endopeptidase ctsD (ctsD).